The sequence spans 100 residues: Cobalt transport protein CbiN (100 aa).

The next 2 helical transmembrane spans lie at 8–28 (LSNWLLIGGVIALAVLPLIFV) and 69–89 (LLFSSQAALGAGIIGYAVGLY).

It belongs to the CbiN family. Forms an energy-coupling factor (ECF) transporter complex composed of an ATP-binding protein (A component, CbiO), a transmembrane protein (T component, CbiQ) and 2 possible substrate-capture proteins (S components, CbiM and CbiN) of unknown stoichimetry.

It is found in the cell inner membrane. It functions in the pathway cofactor biosynthesis; adenosylcobalamin biosynthesis. In terms of biological role, part of the energy-coupling factor (ECF) transporter complex CbiMNOQ involved in cobalt import. This chain is Cobalt transport protein CbiN, found in Nostoc sp. (strain PCC 7120 / SAG 25.82 / UTEX 2576).